A 413-amino-acid chain; its full sequence is Probable Xaa-Pro aminopeptidase UREG_07123 (413 aa).

Positions 194, 205, 340, and 379 each coordinate Mn(2+).

Belongs to the peptidase M24B family. The cofactor is Mn(2+).

The enzyme catalyses Release of any N-terminal amino acid, including proline, that is linked to proline, even from a dipeptide or tripeptide.. Its function is as follows. Catalyzes the removal of a penultimate prolyl residue from the N-termini of peptides. The polypeptide is Probable Xaa-Pro aminopeptidase UREG_07123 (Uncinocarpus reesii (strain UAMH 1704)).